The chain runs to 85 residues: U1-theraphotoxin-Hs1a (85 aa).

The N-terminal stretch at 1–22 (MKVTLIAILTCAAVLVLHTTAA) is a signal peptide. A propeptide spanning residues 23–48 (EELEAESQLMEVGMPDTELAAVDEER) is cleaved from the precursor. 3 cysteine pairs are disulfide-bonded: Cys52-Cys66, Cys56-Cys77, and Cys71-Cys82.

In terms of assembly, heterodimer composed of the two variants Ile-58 and Gln-58. In terms of tissue distribution, expressed by the venom gland.

It is found in the secreted. Its function is as follows. Lethal neurotoxin that blocks neuromuscular transmission. Acts cooperatively to potentiate the activity of huwentoxin-I. This toxin is active against insects. The sequence is that of U1-theraphotoxin-Hs1a from Cyriopagopus schmidti (Chinese bird spider).